The sequence spans 130 residues: Small ribosomal subunit protein uS9 (130 aa).

The interval 108–130 is disordered; it reads SREVERKKVGLRKARKRPQYSKR. Residues 116–130 are compositionally biased toward basic residues; sequence VGLRKARKRPQYSKR.

The protein belongs to the universal ribosomal protein uS9 family.

This chain is Small ribosomal subunit protein uS9, found in Cellvibrio japonicus (strain Ueda107) (Pseudomonas fluorescens subsp. cellulosa).